Reading from the N-terminus, the 498-residue chain is MRTNPTTSSPVVSTLEEKNLGRIAQIIGPVLDVVFPPGKMPNIYNALAVKGRDTVGQQINVTCEVQQLLGNNRVRAVAMSATDGLMRGMEVIDTGAPLSVPVGGATLGRIFNVLGEPVDNLGPVDTRTTSPIHRSAPAFIQLDTKFSIFETGIKVVDLLAPYRRGGKIGLFGGAGVGKTVLIMELINNIAKAHGGVSVFGGVGERTREGNDLYMEMKESGVINEKNIAESKVALVYGQMNEPPGARMRVGLTALTMAEYFRDVNEQDVLLFIDNIFRFVQAGSEVSALLGRMPSAVGYQPTLSTEMGSLQERITSTKEGSITSIQAVYVPADDLTDPAPATTFAHLDATTVLSRVLAAKGIYPAVDPLDSTSTMLQPRIVGEEHYETAQRVKQTSQRYKELQDIIAILGLDELSEEDRLTVARARKIERFLSQPFFVAEVFTGSPGKYVGLAETIRGFQLILSGELDGLPEQAFYLVGNIDEATAKAMNLEVESKLKK.

172–179 (GGAGVGKT) contacts ATP.

The protein belongs to the ATPase alpha/beta chains family. As to quaternary structure, F-type ATPases have 2 components, CF(1) - the catalytic core - and CF(0) - the membrane proton channel. CF(1) has five subunits: alpha(3), beta(3), gamma(1), delta(1), epsilon(1). CF(0) has four main subunits: a(1), b(1), b'(1) and c(9-12).

The protein resides in the plastid. It localises to the chloroplast thylakoid membrane. It catalyses the reaction ATP + H2O + 4 H(+)(in) = ADP + phosphate + 5 H(+)(out). Functionally, produces ATP from ADP in the presence of a proton gradient across the membrane. The catalytic sites are hosted primarily by the beta subunits. The sequence is that of ATP synthase subunit beta, chloroplastic from Nypa fruticans (Nypa palm).